The primary structure comprises 391 residues: 4-hydroxy-3-methylbut-2-en-1-yl diphosphate synthase (flavodoxin) (391 aa).

Positions 281, 284, 316, and 323 each coordinate [4Fe-4S] cluster. The tract at residues 372–391 (EMGGEDGQGGIKGSPVVSVS) is disordered.

The protein belongs to the IspG family. The cofactor is [4Fe-4S] cluster.

It carries out the reaction (2E)-4-hydroxy-3-methylbut-2-enyl diphosphate + oxidized [flavodoxin] + H2O + 2 H(+) = 2-C-methyl-D-erythritol 2,4-cyclic diphosphate + reduced [flavodoxin]. The protein operates within isoprenoid biosynthesis; isopentenyl diphosphate biosynthesis via DXP pathway; isopentenyl diphosphate from 1-deoxy-D-xylulose 5-phosphate: step 5/6. Functionally, converts 2C-methyl-D-erythritol 2,4-cyclodiphosphate (ME-2,4cPP) into 1-hydroxy-2-methyl-2-(E)-butenyl 4-diphosphate. The sequence is that of 4-hydroxy-3-methylbut-2-en-1-yl diphosphate synthase (flavodoxin) from Renibacterium salmoninarum (strain ATCC 33209 / DSM 20767 / JCM 11484 / NBRC 15589 / NCIMB 2235).